Here is a 338-residue protein sequence, read N- to C-terminus: Trans-enoyl reductase fsr4 (338 aa).

65–68 contributes to the NADP(+) binding site; the sequence is KDWK. 147–153 is a substrate binding site; that stretch reads AAFTAAC. NADP(+)-binding positions include 182–185, 205–208, Tyr-227, and 277–278; these read SSAV, AGRA, and II.

It belongs to the zinc-containing alcohol dehydrogenase family.

Trans-enoyl reductase; part of the gene cluster that mediates the biosynthesis of fusarubins, highly pigmented naphthoquinones responsible for the coloration of the fruiting bodies. The non-reducing polyketide synthase FSR1 is responsible for the condensation of seven acetyl-CoA units to yield a haptaketide. After rings A and B are formed by aldol-type cyclization, the PKS-derived product is released as 6-O-demethylfusarubinaldehyde. Then, two hydroxyl groups at C-5 and C-10 are incorporated by FSR3, and simultaneously hydroxyl groups at C-6 and C-8 are methylated by FSR2. The aldehyde is, on the one hand, reduced by FSR3 to 8-O-methylfusarubin alcohol, which equilibrates mainly with 8-O-methylfusarubin and only small amounts of 8-O-methylnectriafurone. On the other hand, the aldehyde can be oxidized to form 8-O-methylfusarubinic acid, a reaction driven by FSR3 equilibrating with 8-O-methylfusarubinlactone, finally resulting in 8-O-methylanhydrofusarubinlactol after a further reduction step and loss of water. 8-O-Methylfusarubinic acid can also undergo decarboxylation, resulting in 8-O-methyl-13-hydroxynorjavanicin after another hydroxylation step at C-13. Both steps are most likely also accomplished by FSR3. No enzymatic function has been determined so far for either FSR4 and FSR5. Their deletion does not alter the product spectrum, but the possibility that they catalyze specific enzymatic steps during perithecium development cannot be ruled out. FSR4 might possess a regulatory function in the biosynthesis of fusarubins. This is Trans-enoyl reductase fsr4 from Gibberella fujikuroi (strain CBS 195.34 / IMI 58289 / NRRL A-6831) (Bakanae and foot rot disease fungus).